The sequence spans 340 residues: Uroporphyrinogen decarboxylase (340 aa).

Substrate is bound by residues 21–25, Asp-71, Tyr-148, Ser-203, and His-316; that span reads RQAGR.

It belongs to the uroporphyrinogen decarboxylase family. As to quaternary structure, homodimer.

The protein resides in the cytoplasm. The catalysed reaction is uroporphyrinogen III + 4 H(+) = coproporphyrinogen III + 4 CO2. Its pathway is porphyrin-containing compound metabolism; protoporphyrin-IX biosynthesis; coproporphyrinogen-III from 5-aminolevulinate: step 4/4. In terms of biological role, catalyzes the decarboxylation of four acetate groups of uroporphyrinogen-III to yield coproporphyrinogen-III. This is Uroporphyrinogen decarboxylase from Campylobacter jejuni subsp. jejuni serotype O:6 (strain 81116 / NCTC 11828).